The sequence spans 206 residues: Small ribosomal subunit protein uS4 (206 aa).

Residues 96–156 form the S4 RNA-binding domain; sequence GRLDNVVYRM…EKAKKQSRVK (61 aa).

This sequence belongs to the universal ribosomal protein uS4 family. As to quaternary structure, part of the 30S ribosomal subunit. Contacts protein S5. The interaction surface between S4 and S5 is involved in control of translational fidelity.

One of the primary rRNA binding proteins, it binds directly to 16S rRNA where it nucleates assembly of the body of the 30S subunit. In terms of biological role, with S5 and S12 plays an important role in translational accuracy. This Yersinia enterocolitica serotype O:8 / biotype 1B (strain NCTC 13174 / 8081) protein is Small ribosomal subunit protein uS4.